A 78-amino-acid chain; its full sequence is Small ribosomal subunit protein bS16c (78 aa).

This sequence belongs to the bacterial ribosomal protein bS16 family.

The protein localises to the plastid. Its subcellular location is the chloroplast. This Chara vulgaris (Common stonewort) protein is Small ribosomal subunit protein bS16c.